A 103-amino-acid chain; its full sequence is Large ribosomal subunit protein bL21 (103 aa).

It belongs to the bacterial ribosomal protein bL21 family. In terms of assembly, part of the 50S ribosomal subunit. Contacts protein L20.

This protein binds to 23S rRNA in the presence of protein L20. This chain is Large ribosomal subunit protein bL21, found in Mycobacterium tuberculosis (strain ATCC 25618 / H37Rv).